We begin with the raw amino-acid sequence, 282 residues long: Phosphatidylserine decarboxylase proenzyme (282 aa).

Active-site charge relay system; for autoendoproteolytic cleavage activity residues include Asp88, His144, and Ser247. The active-site Schiff-base intermediate with substrate; via pyruvic acid; for decarboxylase activity is Ser247. Ser247 carries the pyruvic acid (Ser); by autocatalysis modification.

This sequence belongs to the phosphatidylserine decarboxylase family. PSD-B subfamily. Prokaryotic type I sub-subfamily. Heterodimer of a large membrane-associated beta subunit and a small pyruvoyl-containing alpha subunit. It depends on pyruvate as a cofactor. Post-translationally, is synthesized initially as an inactive proenzyme. Formation of the active enzyme involves a self-maturation process in which the active site pyruvoyl group is generated from an internal serine residue via an autocatalytic post-translational modification. Two non-identical subunits are generated from the proenzyme in this reaction, and the pyruvate is formed at the N-terminus of the alpha chain, which is derived from the carboxyl end of the proenzyme. The autoendoproteolytic cleavage occurs by a canonical serine protease mechanism, in which the side chain hydroxyl group of the serine supplies its oxygen atom to form the C-terminus of the beta chain, while the remainder of the serine residue undergoes an oxidative deamination to produce ammonia and the pyruvoyl prosthetic group on the alpha chain. During this reaction, the Ser that is part of the protease active site of the proenzyme becomes the pyruvoyl prosthetic group, which constitutes an essential element of the active site of the mature decarboxylase.

Its subcellular location is the cell membrane. The catalysed reaction is a 1,2-diacyl-sn-glycero-3-phospho-L-serine + H(+) = a 1,2-diacyl-sn-glycero-3-phosphoethanolamine + CO2. Its pathway is phospholipid metabolism; phosphatidylethanolamine biosynthesis; phosphatidylethanolamine from CDP-diacylglycerol: step 2/2. Functionally, catalyzes the formation of phosphatidylethanolamine (PtdEtn) from phosphatidylserine (PtdSer). This is Phosphatidylserine decarboxylase proenzyme from Xanthomonas campestris pv. campestris (strain 8004).